The primary structure comprises 380 residues: Transaldolase (380 aa).

The active-site Schiff-base intermediate with substrate is Lys141.

This sequence belongs to the transaldolase family. Type 2 subfamily.

Its subcellular location is the cytoplasm. The catalysed reaction is D-sedoheptulose 7-phosphate + D-glyceraldehyde 3-phosphate = D-erythrose 4-phosphate + beta-D-fructose 6-phosphate. The protein operates within carbohydrate degradation; pentose phosphate pathway; D-glyceraldehyde 3-phosphate and beta-D-fructose 6-phosphate from D-ribose 5-phosphate and D-xylulose 5-phosphate (non-oxidative stage): step 2/3. Its function is as follows. Transaldolase is important for the balance of metabolites in the pentose-phosphate pathway. The polypeptide is Transaldolase (Trichodesmium erythraeum (strain IMS101)).